The chain runs to 423 residues: Serine incorporator 5 (423 aa).

Topologically, residues 1 to 36 (MSAQCCAGQLACCCGSAGCSLCCDCCPRIRQSLSTR) are extracellular. A helical membrane pass occupies residues 37–57 (FMYALYFILVVVLCCIMMSTT). Over 58 to 89 (VAHKMKEHIPFFEDMCKGIKAGDTCEKLVGYS) the chain is Cytoplasmic. The chain crosses the membrane as a helical span at residues 90–110 (AVYRVCFGMACFFFIFCLLTL). Residues 111–124 (KINNSKSCRAHIHN) lie on the Extracellular side of the membrane. Residue Asn113 is glycosylated (N-linked (GlcNAc...) asparagine). Residues 125-145 (GFWFFKLLLLGAMCSGAFFIP) form a helical membrane-spanning segment. The Cytoplasmic portion of the chain corresponds to 146–156 (DQDTFLNAWRY). A helical membrane pass occupies residues 157-177 (VGAVGGFLFIGIQLLLLVEFA). Residues 178-198 (HKWNKNWTAGTASNKLWYASL) lie on the Extracellular side of the membrane. The N-linked (GlcNAc...) asparagine glycan is linked to Asn183. The helical transmembrane segment at 199-219 (ALVTLIMYSIATGGLVLMAVF) threads the bilayer. The Cytoplasmic segment spans residues 220-230 (YTQKDSCMENK). A helical transmembrane segment spans residues 231-251 (ILLGVNGGLCLLISLVAISPW). Over 252-258 (VQNRQPH) the chain is Extracellular. The chain crosses the membrane as a helical span at residues 259–279 (SGLLQSGVISCYVTYLTFSAL). Residues 280–311 (SSKPAEVVLDEHGKNVTICVPDFGQDLYRDEN) lie on the Cytoplasmic side of the membrane. Residues 312-332 (LVTILGTSLLIGCILYSCLTS) traverse the membrane as a helical segment. The Extracellular portion of the chain corresponds to 333 to 385 (TTRSSSDALQGRYAAPELEIARCCFCFSPGGEDTEEQQPGKEGPRVIYDEKKG). A helical transmembrane segment spans residues 386-406 (TVYIYSYFHFVFFLASLYVMM). Topologically, residues 407–423 (TVTNWFNHVRSAFHLLP) are cytoplasmic.

The protein belongs to the TDE1 family. Highly expressed in placenta, skeletal muscle, spleen, thymus, testis and peripheral leukocyte and is expressed weakly in the heart, liver and fetal brain.

The protein localises to the cell membrane. It is found in the cytoplasm. It localises to the perinuclear region. It carries out the reaction a 1,2-diacyl-sn-glycero-3-phospho-L-serine(in) = a 1,2-diacyl-sn-glycero-3-phospho-L-serine(out). It catalyses the reaction a 1,2-diacyl-sn-glycero-3-phosphocholine(in) = a 1,2-diacyl-sn-glycero-3-phosphocholine(out). The enzyme catalyses a 1,2-diacyl-sn-glycero-3-phosphoethanolamine(in) = a 1,2-diacyl-sn-glycero-3-phosphoethanolamine(out). Functionally, restriction factor required to restrict infectivity of lentiviruses, such as HIV-1: acts by inhibiting an early step of viral infection. Impairs the penetration of the viral particle into the cytoplasm. Non-ATP-dependent, non-specific lipid transporter for phosphatidylserine, phosphatidylcholine, and phosphatidylethanolamine. Functions as a scramblase that flips lipids in both directions across the membrane. Phospholipid scrambling results in HIV-1 surface exposure of phosphatidylserine and loss of membrane asymmetry, which leads to changes in HIV-1 Env conformation and loss of infectivity. Enhances the incorporation of serine into phosphatidylserine and sphingolipids. May play a role in providing serine molecules for the formation of myelin glycosphingolipids in oligodendrocytes. The chain is Serine incorporator 5 from Homo sapiens (Human).